The chain runs to 205 residues: Regulatory protein RecX (205 aa).

Belongs to the RecX family.

Its subcellular location is the cytoplasm. Modulates RecA activity. This is Regulatory protein RecX from Finegoldia magna (strain ATCC 29328 / DSM 20472 / WAL 2508) (Peptostreptococcus magnus).